We begin with the raw amino-acid sequence, 615 residues long: Protein translocase subunit SecD (615 aa).

Helical transmembrane passes span 10 to 30 (YIML…NLYG), 452 to 472 (QGLE…IFFY), 477 to 497 (LIAT…MSLL), 504 to 524 (MPGI…NVLI), 546 to 568 (YAGA…IILY), and 585 to 605 (GVAT…NLLY).

It belongs to the SecD/SecF family. SecD subfamily. As to quaternary structure, forms a complex with SecF. Part of the essential Sec protein translocation apparatus which comprises SecA, SecYEG and auxiliary proteins SecDF-YajC and YidC.

The protein resides in the cell inner membrane. Functionally, part of the Sec protein translocase complex. Interacts with the SecYEG preprotein conducting channel. SecDF uses the proton motive force (PMF) to complete protein translocation after the ATP-dependent function of SecA. This Salmonella choleraesuis (strain SC-B67) protein is Protein translocase subunit SecD.